A 143-amino-acid polypeptide reads, in one-letter code: Large ribosomal subunit protein uL16 (143 aa).

Positions 1–17 (MLQPKKTKFRRSQKGRM) are enriched in basic residues. Positions 1-25 (MLQPKKTKFRRSQKGRMKGNAQRGN) are disordered.

The protein belongs to the universal ribosomal protein uL16 family. In terms of assembly, part of the 50S ribosomal subunit.

Its function is as follows. Binds 23S rRNA and is also seen to make contacts with the A and possibly P site tRNAs. The chain is Large ribosomal subunit protein uL16 from Azobacteroides pseudotrichonymphae genomovar. CFP2.